Here is a 1026-residue protein sequence, read N- to C-terminus: Multidrug resistance protein MdtC (1026 aa).

11 helical membrane-spanning segments follow: residues 15-35, 333-353, 360-380, 387-407, 431-451, 463-483, 528-548, 853-873, 897-917, 953-973, and 984-1004; these read ILIA…LPVA, EVEE…FLFL, LIPA…MYLC, LSLM…IVVL, VGFT…PLLL, FAVT…TLTP, LVGV…IAIP, LILI…LYES, LFNA…IGIV, PIMM…LSGG, and ITIV…TPVV.

Belongs to the resistance-nodulation-cell division (RND) (TC 2.A.6) family. MdtC subfamily. As to quaternary structure, part of a tripartite efflux system composed of MdtA, MdtB and MdtC. MdtC forms a heteromultimer with MdtB.

The protein resides in the cell inner membrane. This is Multidrug resistance protein MdtC from Salmonella newport (strain SL254).